Here is a 491-residue protein sequence, read N- to C-terminus: Ketol-acid reductoisomerase (NADP(+)) (491 aa).

Residues 15 to 208 enclose the KARI N-terminal Rossmann domain; the sequence is AQLGKCRFMG…GGHRAGVLES (194 aa). Residues 45–48, Arg-68, Arg-76, Ser-78, and 108–110 contribute to the NADP(+) site; these read CGAQ and DKQ. The active site involves His-132. Gly-158 lines the NADP(+) pocket. KARI C-terminal knotted domains follow at residues 209–344 and 345–484; these read SFVA…TAPQ and FEGK…MTDM. Mg(2+) is bound by residues Asp-217, Glu-221, Glu-389, and Glu-393. Residue Ser-414 participates in substrate binding.

This sequence belongs to the ketol-acid reductoisomerase family. It depends on Mg(2+) as a cofactor.

The catalysed reaction is (2R)-2,3-dihydroxy-3-methylbutanoate + NADP(+) = (2S)-2-acetolactate + NADPH + H(+). It catalyses the reaction (2R,3R)-2,3-dihydroxy-3-methylpentanoate + NADP(+) = (S)-2-ethyl-2-hydroxy-3-oxobutanoate + NADPH + H(+). Its pathway is amino-acid biosynthesis; L-isoleucine biosynthesis; L-isoleucine from 2-oxobutanoate: step 2/4. It participates in amino-acid biosynthesis; L-valine biosynthesis; L-valine from pyruvate: step 2/4. Functionally, involved in the biosynthesis of branched-chain amino acids (BCAA). Catalyzes an alkyl-migration followed by a ketol-acid reduction of (S)-2-acetolactate (S2AL) to yield (R)-2,3-dihydroxy-isovalerate. In the isomerase reaction, S2AL is rearranged via a Mg-dependent methyl migration to produce 3-hydroxy-3-methyl-2-ketobutyrate (HMKB). In the reductase reaction, this 2-ketoacid undergoes a metal-dependent reduction by NADPH to yield (R)-2,3-dihydroxy-isovalerate. This is Ketol-acid reductoisomerase (NADP(+)) from Salmonella agona (strain SL483).